A 213-amino-acid polypeptide reads, in one-letter code: Ribosomal RNA small subunit methyltransferase G (213 aa).

Residues Gly-75, Phe-80, 128-129, and Arg-144 each bind S-adenosyl-L-methionine; that span reads IE.

This sequence belongs to the methyltransferase superfamily. RNA methyltransferase RsmG family.

It localises to the cytoplasm. The catalysed reaction is guanosine(527) in 16S rRNA + S-adenosyl-L-methionine = N(7)-methylguanosine(527) in 16S rRNA + S-adenosyl-L-homocysteine. Its function is as follows. Specifically methylates the N7 position of guanine in position 527 of 16S rRNA. The sequence is that of Ribosomal RNA small subunit methyltransferase G from Brucella ovis (strain ATCC 25840 / 63/290 / NCTC 10512).